A 309-amino-acid chain; its full sequence is Aspartate carbamoyltransferase catalytic subunit (309 aa).

Carbamoyl phosphate contacts are provided by arginine 57 and threonine 58. Residue lysine 86 participates in L-aspartate binding. The carbamoyl phosphate site is built by arginine 107, histidine 135, and glutamine 138. L-aspartate contacts are provided by arginine 168 and arginine 228. Leucine 267 and proline 268 together coordinate carbamoyl phosphate.

Belongs to the aspartate/ornithine carbamoyltransferase superfamily. ATCase family. In terms of assembly, heterooligomer of catalytic and regulatory chains.

The enzyme catalyses carbamoyl phosphate + L-aspartate = N-carbamoyl-L-aspartate + phosphate + H(+). The protein operates within pyrimidine metabolism; UMP biosynthesis via de novo pathway; (S)-dihydroorotate from bicarbonate: step 2/3. Functionally, catalyzes the condensation of carbamoyl phosphate and aspartate to form carbamoyl aspartate and inorganic phosphate, the committed step in the de novo pyrimidine nucleotide biosynthesis pathway. The chain is Aspartate carbamoyltransferase catalytic subunit from Cenarchaeum symbiosum (strain A).